A 286-amino-acid chain; its full sequence is 33 kDa chaperonin (286 aa).

2 disulfide bridges follow: Cys-225–Cys-227 and Cys-258–Cys-261.

Belongs to the HSP33 family. Under oxidizing conditions two disulfide bonds are formed involving the reactive cysteines. Under reducing conditions zinc is bound to the reactive cysteines and the protein is inactive.

It localises to the cytoplasm. Its function is as follows. Redox regulated molecular chaperone. Protects both thermally unfolding and oxidatively damaged proteins from irreversible aggregation. Plays an important role in the bacterial defense system toward oxidative stress. This Shewanella sp. (strain MR-4) protein is 33 kDa chaperonin.